Reading from the N-terminus, the 250-residue chain is Anti-Pycsar protein Apyc1 (250 aa).

Residues tyrosine 19–histidine 220 form a beta-lactamase-like region. Histidine 61, histidine 63, aspartate 65, histidine 66, histidine 146, aspartate 166, and histidine 220 together coordinate Zn(2+).

Belongs to the anti-Pycsar protein Apyc1 family. Homodimer. The cofactor is Zn(2+).

It carries out the reaction 3',5'-cyclic CMP + H2O = CMP + H(+). The enzyme catalyses 3',5'-cyclic UMP + H2O = UMP + H(+). Counteracts the endogenous Pycsar antiviral defense system. Phosphodiesterase that enables metal-dependent hydrolysis of host cyclic nucleotide Pycsar defense signals such as cCMP and cUMP. This chain is Anti-Pycsar protein Apyc1, found in Paenibacillus xerothermodurans.